Reading from the N-terminus, the 661-residue chain is UvrABC system protein B (661 aa).

The 390-residue stretch at 25-414 folds into the Helicase ATP-binding domain; the sequence is AGLSSKKRSQ…GTVVELIIRP (390 aa). 38 to 45 provides a ligand contact to ATP; it reads GITGSGKT. The Beta-hairpin motif lies at 91–114; sequence YYDYYQPEAYIARTDTFIEKDSSI. Positions 430 to 592 constitute a Helicase C-terminal domain; sequence QVEDLISEIQ…IIPKTINRAI (163 aa). One can recognise a UVR domain in the interval 621–656; sequence KTHIDKLKKEMLKAASNLEFEQAVKLRDQLKTLEEA.

It belongs to the UvrB family. As to quaternary structure, forms a heterotetramer with UvrA during the search for lesions. Interacts with UvrC in an incision complex.

Its subcellular location is the cytoplasm. In terms of biological role, the UvrABC repair system catalyzes the recognition and processing of DNA lesions. A damage recognition complex composed of 2 UvrA and 2 UvrB subunits scans DNA for abnormalities. Upon binding of the UvrA(2)B(2) complex to a putative damaged site, the DNA wraps around one UvrB monomer. DNA wrap is dependent on ATP binding by UvrB and probably causes local melting of the DNA helix, facilitating insertion of UvrB beta-hairpin between the DNA strands. Then UvrB probes one DNA strand for the presence of a lesion. If a lesion is found the UvrA subunits dissociate and the UvrB-DNA preincision complex is formed. This complex is subsequently bound by UvrC and the second UvrB is released. If no lesion is found, the DNA wraps around the other UvrB subunit that will check the other stand for damage. In Rickettsia conorii (strain ATCC VR-613 / Malish 7), this protein is UvrABC system protein B.